A 213-amino-acid polypeptide reads, in one-letter code: Methylthioribulose-1-phosphate dehydratase (213 aa).

Zn(2+) is bound by residues His97 and His99.

This sequence belongs to the aldolase class II family. MtnB subfamily. Homotetramer. Zn(2+) serves as cofactor.

The enzyme catalyses 5-(methylsulfanyl)-D-ribulose 1-phosphate = 5-methylsulfanyl-2,3-dioxopentyl phosphate + H2O. It functions in the pathway amino-acid biosynthesis; L-methionine biosynthesis via salvage pathway; L-methionine from S-methyl-5-thio-alpha-D-ribose 1-phosphate: step 2/6. In terms of biological role, catalyzes the dehydration of methylthioribulose-1-phosphate (MTRu-1-P) into 2,3-diketo-5-methylthiopentyl-1-phosphate (DK-MTP-1-P). This Geobacillus sp. (strain WCH70) protein is Methylthioribulose-1-phosphate dehydratase.